The primary structure comprises 441 residues: tRNA modification GTPase MnmE (441 aa).

3 residues coordinate (6S)-5-formyl-5,6,7,8-tetrahydrofolate: R23, E81, and R121. The 148-residue stretch at 219 to 366 folds into the TrmE-type G domain; it reads GFTVVLAGAP…LLDAIQAAAE (148 aa). GTP is bound by residues 229-234, 248-254, and 273-276; these read NSGKST, SDSPGTT, and DTAG. Residues S233 and T254 each coordinate Mg(2+). A (6S)-5-formyl-5,6,7,8-tetrahydrofolate-binding site is contributed by K441.

Belongs to the TRAFAC class TrmE-Era-EngA-EngB-Septin-like GTPase superfamily. TrmE GTPase family. In terms of assembly, homodimer. Heterotetramer of two MnmE and two MnmG subunits. The cofactor is K(+).

The protein localises to the cytoplasm. Exhibits a very high intrinsic GTPase hydrolysis rate. Involved in the addition of a carboxymethylaminomethyl (cmnm) group at the wobble position (U34) of certain tRNAs, forming tRNA-cmnm(5)s(2)U34. The chain is tRNA modification GTPase MnmE from Methylobacterium radiotolerans (strain ATCC 27329 / DSM 1819 / JCM 2831 / NBRC 15690 / NCIMB 10815 / 0-1).